A 283-amino-acid polypeptide reads, in one-letter code: Pantothenate synthetase (283 aa).

Position 30–37 (30–37) interacts with ATP; it reads MGYLHEGH. His37 acts as the Proton donor in catalysis. Residue Gln61 coordinates (R)-pantoate. Gln61 is a beta-alanine binding site. ATP is bound at residue 147–150; it reads GQKD. Gln153 is a binding site for (R)-pantoate. Residues Val176 and 184–187 contribute to the ATP site; that span reads LSSR.

This sequence belongs to the pantothenate synthetase family. Homodimer.

It localises to the cytoplasm. The enzyme catalyses (R)-pantoate + beta-alanine + ATP = (R)-pantothenate + AMP + diphosphate + H(+). Its pathway is cofactor biosynthesis; (R)-pantothenate biosynthesis; (R)-pantothenate from (R)-pantoate and beta-alanine: step 1/1. Functionally, catalyzes the condensation of pantoate with beta-alanine in an ATP-dependent reaction via a pantoyl-adenylate intermediate. In Moorella thermoacetica (strain ATCC 39073 / JCM 9320), this protein is Pantothenate synthetase.